Here is a 348-residue protein sequence, read N- to C-terminus: MENITRELFDQYISRQAQLNRVSPAAVAAKFAVDPTVQQKLEAAAQESDSFLSKINVFGVTQQIGQKVLIGSKGPLAGVNNSTTTRRNPADNSKMEPYDYMCRKVNYDYGISYEQLDAWAHQPNFQPLISSAMARQMSLDRIMIGFNGTSYADPSNRAANPLLQDCGIGFLEKIRKEAPHRVISNITVTSRDEDNKIITKGTYGNVSAAVYDAKNSLMDEWHKRNPDNVVILAGDLLTTSNFPAINAMSQTNPNTEMLAGQLIVAQERVGNMPTFIAPFFPVNGILITPFKNLSIYYQRGGLRRTIKEEPEYNRVATYQSSNDDFVVEDYGNVAFIDGITFAQPENGG.

Positions 1–31 (MENITRELFDQYISRQAQLNRVSPAAVAAKF) are excised as a propeptide.

Belongs to the P2-like viruses major capsid protein family.

It is found in the virion. This is Major capsid protein from Serratia marcescens (Serratia marcescens bacteriophage KSP20).